A 426-amino-acid polypeptide reads, in one-letter code: Protein EARLY STARVATION 1, chloroplastic (426 aa).

Residues Met-1–Arg-58 constitute a chloroplast transit peptide. Disordered stretches follow at residues Cys-106 to Ala-127 and Gln-396 to Gln-426. Over residues Thr-118–Ala-127 the composition is skewed to basic and acidic residues. A compositionally biased stretch (pro residues) spans Pro-412 to Gln-426.

This sequence belongs to the ESV1 family.

It is found in the plastid. It localises to the chloroplast stroma. The protein localises to the plastid stroma. Binds preferentially to highly ordered alpha-glucans, such as starch and crystalline maltodextrins. Involved in the organization of the starch granule matrix, thus influencing starch turnover by modulating the accessibility of starch polymers to modifying and degrading enzymes involved in phosphorylation, hydrolyzes and synthesis, including starch synthases (SSI and SSIII), starch phosphorylases (PHS1), isoamylase, beta-amylase, glucan water dikinase (GWD) and phosphoglucan water dikinase (PWD). Prevents GWD- and PWD-mediated starch phosphorylation, and subsequent degradation. Required for the control of starch degradation in leaves and starch distribution in nonphotosynthetic parts (e.g. cells immediately adjacent to veins, columella cells of root caps, stems, flowers and siliques) by limiting the hasty depletion of starch reserves during the night. Promotes gravitropic responses, negative in shoots but positive in roots, by maintaining starch granules (statoliths) accumulation in hypocotyls and roots columella, especially in dark conditions and in the endodermis, where starch is formed from transported glucose-6-phosphates. The sequence is that of Protein EARLY STARVATION 1, chloroplastic from Arabidopsis thaliana (Mouse-ear cress).